A 67-amino-acid polypeptide reads, in one-letter code: ATP synthase F(0) complex subunit 8 (67 aa).

Residues 8-24 (TWFTTIVAMILSLFILM) form a helical membrane-spanning segment. Position 54 is an N6-acetyllysine; alternate (Lys54). Residue Lys54 is modified to N6-succinyllysine; alternate. Position 57 is an N6-acetyllysine (Lys57).

It belongs to the ATPase protein 8 family. In terms of assembly, component of the ATP synthase complex composed at least of ATP5F1A/subunit alpha, ATP5F1B/subunit beta, ATP5MC1/subunit c (homooctomer), MT-ATP6/subunit a, MT-ATP8/subunit 8, ATP5ME/subunit e, ATP5MF/subunit f, ATP5MG/subunit g, ATP5MK/subunit k, ATP5MJ/subunit j, ATP5F1C/subunit gamma, ATP5F1D/subunit delta, ATP5F1E/subunit epsilon, ATP5PF/subunit F6, ATP5PB/subunit b, ATP5PD/subunit d, ATP5PO/subunit OSCP. ATP synthase complex consists of a soluble F(1) head domain (subunits alpha(3) and beta(3)) - the catalytic core - and a membrane F(0) domain - the membrane proton channel (subunits c, a, 8, e, f, g, k and j). These two domains are linked by a central stalk (subunits gamma, delta, and epsilon) rotating inside the F1 region and a stationary peripheral stalk (subunits F6, b, d, and OSCP). Interacts with PRICKLE3.

The protein localises to the mitochondrion membrane. In terms of biological role, subunit 8, of the mitochondrial membrane ATP synthase complex (F(1)F(0) ATP synthase or Complex V) that produces ATP from ADP in the presence of a proton gradient across the membrane which is generated by electron transport complexes of the respiratory chain. ATP synthase complex consist of a soluble F(1) head domain - the catalytic core - and a membrane F(1) domain - the membrane proton channel. These two domains are linked by a central stalk rotating inside the F(1) region and a stationary peripheral stalk. During catalysis, ATP synthesis in the catalytic domain of F(1) is coupled via a rotary mechanism of the central stalk subunits to proton translocation. In vivo, can only synthesize ATP although its ATP hydrolase activity can be activated artificially in vitro. Part of the complex F(0) domain. In Oryctolagus cuniculus (Rabbit), this protein is ATP synthase F(0) complex subunit 8.